The sequence spans 278 residues: UPF0758 protein BURPS668_0979 (278 aa).

The disordered stretch occupies residues 1–64 (MQYEIVSAGE…ATAAARRGRD (64 aa)). The span at 22–59 (AAAPAAPSSAVPSSAALSSAALSSAARPTGAPPATAAA) shows a compositional bias: low complexity. The region spanning 156–278 (LVDSPGAVDD…TFSFAQAGWI (123 aa)) is the MPN domain. 3 residues coordinate Zn(2+): His227, His229, and Asp240. Positions 227-240 (HNHPSGAVRPSAAD) match the JAMM motif motif.

Belongs to the UPF0758 family.

The chain is UPF0758 protein BURPS668_0979 from Burkholderia pseudomallei (strain 668).